Here is a 91-residue protein sequence, read N- to C-terminus: Acylphosphatase (91 aa).

In terms of domain architecture, Acylphosphatase-like spans 6 to 91; the sequence is CMRCYISGRV…WEDYISFDVL (86 aa). Active-site residues include Arg21 and Asn39.

The protein belongs to the acylphosphatase family.

It carries out the reaction an acyl phosphate + H2O = a carboxylate + phosphate + H(+). In Legionella pneumophila subsp. pneumophila (strain Philadelphia 1 / ATCC 33152 / DSM 7513), this protein is Acylphosphatase (acyP).